Reading from the N-terminus, the 57-residue chain is Small ribosomal subunit protein bS21 (57 aa).

The segment covering 32–42 (VRRREHYEKPS) has biased composition (basic and acidic residues). The segment at 32-57 (VRRREHYEKPSQRRKRKLEASRRRRR) is disordered. Positions 43–57 (QRRKRKLEASRRRRR) are enriched in basic residues.

This sequence belongs to the bacterial ribosomal protein bS21 family.

This chain is Small ribosomal subunit protein bS21, found in Synechococcus elongatus (strain ATCC 33912 / PCC 7942 / FACHB-805) (Anacystis nidulans R2).